Reading from the N-terminus, the 536-residue chain is Subtilisin-like proteinase Spm1 (536 aa).

A signal peptide spans 1 to 15 (MKSVILLSLAACAVA). The propeptide occupies 16–147 (APTAGVETIH…RYEEVKKDEC (132 aa)). In terms of domain architecture, Inhibitor I9 spans 44-137 (YIIKFKKHVD…IERDTIVHTM (94 aa)). The 307-residue stretch at 156-462 (PWGLSRVSHR…GGCSNYFEIV (307 aa)) folds into the Peptidase S8 domain. Residues Asp-192 and His-224 each act as charge relay system in the active site. Residues Asn-254 and Asn-294 are each glycosylated (N-linked (GlcNAc...) asparagine). Ser-390 acts as the Charge relay system in catalysis.

Belongs to the peptidase S8 family.

Its subcellular location is the vacuole. This is Subtilisin-like proteinase Spm1 (SPM1) from Pyricularia oryzae (strain 70-15 / ATCC MYA-4617 / FGSC 8958) (Rice blast fungus).